Reading from the N-terminus, the 195-residue chain is Protein SYM1 (195 aa).

The next 4 membrane-spanning stretches (helical) occupy residues 17–39 (LITN…QFFF), 59–78 (RAII…WYKF), 99–121 (STLL…PLYY), and 168–190 (PVQF…LSYV).

The protein belongs to the peroxisomal membrane protein PXMP2/4 family.

The protein resides in the mitochondrion inner membrane. May be involved in cellular response to stress. Required to maintain mitochondrial DNA (mtDNA) integrity and stability. The protein is Protein SYM1 (SYM1) of Candida albicans (strain SC5314 / ATCC MYA-2876) (Yeast).